Here is a 1354-residue protein sequence, read N- to C-terminus: Rho-associated protein kinase 1 (1354 aa).

Serine 2 is subject to N-acetylserine. Positions 76–338 (YEVVKVIGRG…VEEIKRHLFF (263 aa)) constitute a Protein kinase domain. Residues 82-90 (IGRGAFGEV) and lysine 105 contribute to the ATP site. The active-site Proton acceptor is aspartate 198. The 69-residue stretch at 341 to 409 (DQWAWETLRD…YSNRRYLPSA (69 aa)) folds into the AGC-kinase C-terminal domain. The interval 368 to 727 (FDDLEEDKGD…KKLKEEREAR (360 aa)) is interaction with FHOD1. Positions 422–692 (KSLQESLQKT…RLEQEVNEHK (271 aa)) form a coiled coil. Residues 479–556 (SAVSQIEKEK…LEEANDLLRT (78 aa)) enclose the REM-1 domain. An SHROOM3 binding region spans residues 707–946 (EAKSVAMCEM…TVSRLEETNS (240 aa)). The region spanning 949 to 1015 (TKDIEMLRKE…LAEIMNRKDF (67 aa)) is the RhoBD domain. Positions 998 to 1010 (LKTQAVNKLAEIM) are RHOA binding. The stretch at 1011–1102 (NRKDFKIDRK…KLLDLSDSTS (92 aa)) forms a coiled coil. Phosphoserine occurs at positions 1105 and 1108. The interval 1115 to 1354 (NLPESRIEGW…VVKNTSGKTS (240 aa)) is auto-inhibitory. Positions 1118-1317 (ESRIEGWLSV…WVTHLVKKIP (200 aa)) constitute a PH domain. The Phorbol-ester/DAG-type zinc-finger motif lies at 1228 to 1283 (GHEFIPTLYHFPANCEACAKPLWHVFKPPPALECRRCHVKCHRDHLDKKEDLISPC). Residue serine 1328 is modified to Phosphoserine. Positions 1333-1354 (STRSTANQSFRKVVKNTSGKTS) are disordered.

Belongs to the protein kinase superfamily. AGC Ser/Thr protein kinase family. Homodimer. Interacts with RHOA (activated by GTP), RHOB, RHOC, GEM, MYLC2B, RHOE, PPP1R12A, LIMK1, LIMK2, TSG101, CHORDC1, DAPK3, PFN1 and JIP3. Interacts with FHOD1 in a Src-dependent manner. Interacts with PTEN. Interacts with ITGB1BP1 (via N-terminus and PTB domain). Interacts with SHROOM3. Mg(2+) is required as a cofactor. Autophosphorylated on serine and threonine residues. Post-translationally, cleaved by caspase-3 during apoptosis. This leads to constitutive activation of the kinase and membrane blebbing. As to expression, highly expressed in brain, heart, lung, liver, stomach, spleen, kidney, testis, muscle, embryo and placenta.

The protein resides in the cytoplasm. It is found in the cytoskeleton. The protein localises to the microtubule organizing center. It localises to the centrosome. Its subcellular location is the centriole. The protein resides in the golgi apparatus membrane. It is found in the cell projection. The protein localises to the bleb. It localises to the cell membrane. Its subcellular location is the lamellipodium. The protein resides in the ruffle. It carries out the reaction L-seryl-[protein] + ATP = O-phospho-L-seryl-[protein] + ADP + H(+). It catalyses the reaction L-threonyl-[protein] + ATP = O-phospho-L-threonyl-[protein] + ADP + H(+). Its activity is regulated as follows. Activated by RHOA binding. Inhibited by Y-27632. In terms of biological role, protein kinase which is a key regulator of the actin cytoskeleton and cell polarity. Involved in regulation of smooth muscle contraction, actin cytoskeleton organization, stress fiber and focal adhesion formation, neurite retraction, cell adhesion and motility via phosphorylation of DAPK3, GFAP, LIMK1, LIMK2, MYL9/MLC2, TPPP, PFN1 and PPP1R12A. Phosphorylates FHOD1 and acts synergistically with it to promote SRC-dependent non-apoptotic plasma membrane blebbing. Phosphorylates JIP3 and regulates the recruitment of JNK to JIP3 upon UVB-induced stress. Acts as a suppressor of inflammatory cell migration by regulating PTEN phosphorylation and stability. Acts as a negative regulator of VEGF-induced angiogenic endothelial cell activation. Required for centrosome positioning and centrosome-dependent exit from mitosis. Plays a role in terminal erythroid differentiation. Inhibits podocyte motility via regulation of actin cytoskeletal dynamics and phosphorylation of CFL1. Promotes keratinocyte terminal differentiation. Involved in osteoblast compaction through the fibronectin fibrillogenesis cell-mediated matrix assembly process, essential for osteoblast mineralization. May regulate closure of the eyelids and ventral body wall by inducing the assembly of actomyosin bundles. The polypeptide is Rho-associated protein kinase 1 (Rock1) (Mus musculus (Mouse)).